A 217-amino-acid polypeptide reads, in one-letter code: Non-structural protein NS3 (217 aa).

The protein belongs to the orbivirus NS3 family.

In terms of biological role, may play a role in the release of virions from infected cells. In Camelus dromedarius (Dromedary), this protein is Non-structural protein NS3 (Segment-10).